We begin with the raw amino-acid sequence, 876 residues long: Leucine--tRNA ligase (876 aa).

Residues 42–52 (PYPSGKLHMGH) carry the 'HIGH' region motif. Positions 634-638 (KMGKS) match the 'KMSKS' region motif. Lys-637 is an ATP binding site.

The protein belongs to the class-I aminoacyl-tRNA synthetase family.

The protein localises to the cytoplasm. The enzyme catalyses tRNA(Leu) + L-leucine + ATP = L-leucyl-tRNA(Leu) + AMP + diphosphate. This is Leucine--tRNA ligase from Variovorax paradoxus (strain S110).